The chain runs to 384 residues: Guanine nucleotide-binding protein alpha-1 subunit (384 aa).

The disordered stretch occupies residues 1-22; that stretch reads MGSLCSRNKHYSQADDEENTQT. G2 is lipidated: N-myristoyl glycine. The S-palmitoyl cysteine moiety is linked to residue C5. A G-alpha domain is found at 38–384; sequence HIQKLLLLGA…RRNLFEAGLL (347 aa). The interval 41 to 54 is G1 motif; the sequence is KLLLLGAGDSGKST. GTP is bound by residues D49, S50, G51, K52, S53, T54, D163, L188, T194, G222, N288, K289, D291, and A356. S53 contacts Mg(2+). The interval 186 to 194 is G2 motif; sequence DVLFARIRT. T194 is a binding site for Mg(2+). A G3 motif region spans residues 215 to 224; it reads YRLFDVGGQR. The interval 284-291 is G4 motif; sequence MLFLNKFD. The tract at residues 354–359 is G5 motif; that stretch reads TTALDQ.

The protein belongs to the G-alpha family. G proteins are composed of 3 units; alpha, beta and gamma. The alpha chain contains the guanine nucleotide binding site. The cofactor is Mg(2+).

Guanine nucleotide-binding proteins (G proteins) are involved as modulators or transducers in various transmembrane signaling systems. In Solanum tuberosum (Potato), this protein is Guanine nucleotide-binding protein alpha-1 subunit (GPA1).